The chain runs to 339 residues: Fructose-1,6-bisphosphatase class 1 (339 aa).

Residues glutamate 101, aspartate 120, leucine 122, and aspartate 123 each contribute to the Mg(2+) site. Substrate-binding positions include 123 to 126 (DGSS), asparagine 215, and lysine 281. Position 287 (glutamate 287) interacts with Mg(2+).

The protein belongs to the FBPase class 1 family. In terms of assembly, homotetramer. The cofactor is Mg(2+).

Its subcellular location is the cytoplasm. The enzyme catalyses beta-D-fructose 1,6-bisphosphate + H2O = beta-D-fructose 6-phosphate + phosphate. It functions in the pathway carbohydrate biosynthesis; gluconeogenesis. This is Fructose-1,6-bisphosphatase class 1 from Polynucleobacter necessarius subsp. necessarius (strain STIR1).